We begin with the raw amino-acid sequence, 199 residues long: MLVPIVVEQTGRGERSYDIYSRLLKDRIIFLGGPIDDHVANLVIAQLLFLEAEDPDKDIHLYINSPGGVVTAGMAIYDTMQYIKAPVSTICVGQAASMGALLLSGGEKGKRFSLTHSRIMIHQPLGGFQGQATDIHIHAQEILKMKKRLNEIIAENSGQALEKVEADTERDYFMSGEEAKSYGIIDAIIARKPTSGGSR.

Ser-97 acts as the Nucleophile in catalysis. His-122 is a catalytic residue.

The protein belongs to the peptidase S14 family. Fourteen ClpP subunits assemble into 2 heptameric rings which stack back to back to give a disk-like structure with a central cavity, resembling the structure of eukaryotic proteasomes.

The protein localises to the cytoplasm. The catalysed reaction is Hydrolysis of proteins to small peptides in the presence of ATP and magnesium. alpha-casein is the usual test substrate. In the absence of ATP, only oligopeptides shorter than five residues are hydrolyzed (such as succinyl-Leu-Tyr-|-NHMec, and Leu-Tyr-Leu-|-Tyr-Trp, in which cleavage of the -Tyr-|-Leu- and -Tyr-|-Trp bonds also occurs).. Its function is as follows. Cleaves peptides in various proteins in a process that requires ATP hydrolysis. Has a chymotrypsin-like activity. Plays a major role in the degradation of misfolded proteins. In Geobacter metallireducens (strain ATCC 53774 / DSM 7210 / GS-15), this protein is ATP-dependent Clp protease proteolytic subunit.